We begin with the raw amino-acid sequence, 244 residues long: MRNIKLIIEYDGTAYCGWQLQPNGITIQQVIEESLEKMLGQSVRLQSSGRTDAGVHALGMVAVFKTQKDLPVRAFSDGLNCLLPPDIAIRDASEVPLSFNPRADAISKHYRYTIYNSKRRSPLTRLNSWHLRGILNMELMQLGASHFVGEHDFAAFRASNCVAKTTIRRMFHVSVAKVGDSVIIDVHGSGFLKNMVRVIAGTLVAVGQGKLDPSAIPGLLAGGDRSASGITAPPQGLCLMEVFY.

Aspartate 52 (nucleophile) is an active-site residue. Tyrosine 110 contacts substrate.

Belongs to the tRNA pseudouridine synthase TruA family. As to quaternary structure, homodimer.

The enzyme catalyses uridine(38/39/40) in tRNA = pseudouridine(38/39/40) in tRNA. Its function is as follows. Formation of pseudouridine at positions 38, 39 and 40 in the anticodon stem and loop of transfer RNAs. This Geotalea daltonii (strain DSM 22248 / JCM 15807 / FRC-32) (Geobacter daltonii) protein is tRNA pseudouridine synthase A.